A 605-amino-acid polypeptide reads, in one-letter code: MRIDQSIINEIKDKTDILDLVSEYVKLEKRGRNYIGLCPFHDEKTPSFTVSEDKQICHCFGCKKGGNVFQFTQEIKDISFVEAVKELGDRVNVAVDIEATQSNSNVQIASDDLQMIEMHELIQEFYYYALTKTVEGEQALTYLQERGFTDALIKERGIGFAPDSSHFCHDFLQKKGYDIELAYEAGLLSRNEENFSYYDRFRNRIMFPLKNAQGRIVGYSGRTYTGQEPKYLNSPETPIFQKRKLLYNLDKARKSIRKLDEIVLLEGFMDVIKSDTAGLKNVVATMGTQLSDEHITFIRKLTSNITLMFDGDFAGSEATLKTGQHLLQQGLNVFVIQLPSGMDPDEYIGKYGNDAFTTFVKNDKKSFAHYKVSILKDEIAHNDLSYERYLKELSHDISLMKSSILQQKAINDVAPFFNVSPEQLANEIQFNQAPANYYPEDEYGGYDEYGGYIEPEPIGMAQFDNLSRQEKAERAFLKHLMRDKDTFLNYYESVDKDNFTNQHFKYVFEVLHDFYAENDQYNISDAVQYVNSNELRETLISLEQYNLNDEPYENEIDDYVNVINEKGQETIESLNHKLREATRIGDVELQKYYLQQIVAKNKERM.

The CHC2-type zinc finger occupies 38 to 62 (CPFHDEKTPSFTVSEDKQICHCFGC). Residues 260-341 (DEIVLLEGFM…NVFVIQLPSG (82 aa)) form the Toprim domain. Residues Glu266, Asp310, and Asp312 each contribute to the Mg(2+) site.

This sequence belongs to the DnaG primase family. As to quaternary structure, monomer. Interacts with DnaB. The cofactor is Zn(2+). It depends on Mg(2+) as a cofactor.

The enzyme catalyses ssDNA + n NTP = ssDNA/pppN(pN)n-1 hybrid + (n-1) diphosphate.. Its function is as follows. RNA polymerase that catalyzes the synthesis of short RNA molecules used as primers for DNA polymerase during DNA replication. This is DNA primase from Staphylococcus aureus (strain Mu50 / ATCC 700699).